The following is an 86-amino-acid chain: Venom metalloproteinase (86 aa).

Aspartate 7 provides a ligand contact to Ca(2+). Histidine 67 provides a ligand contact to Zn(2+). Glutamate 68 is a catalytic residue. Zn(2+)-binding residues include histidine 71 and histidine 77.

It belongs to the venom metalloproteinase (M12B) family. Requires Zn(2+) as cofactor. In terms of tissue distribution, expressed by the venom gland.

The protein resides in the secreted. The sequence is that of Venom metalloproteinase from Tityus serrulatus (Brazilian scorpion).